A 354-amino-acid polypeptide reads, in one-letter code: mRNA cap guanine-N(7) methyltransferase 2 (354 aa).

The mRNA cap 0 methyltransferase domain occupies 8–286 (KPEQSHHRLF…LYATFIFQKP (279 aa)). S-adenosyl-L-methionine is bound by residues lysine 21, aspartate 61, and 88–89 (DP).

It belongs to the class I-like SAM-binding methyltransferase superfamily. mRNA cap 0 methyltransferase family.

Its subcellular location is the nucleus. It carries out the reaction a 5'-end (5'-triphosphoguanosine)-ribonucleoside in mRNA + S-adenosyl-L-methionine = a 5'-end (N(7)-methyl 5'-triphosphoguanosine)-ribonucleoside in mRNA + S-adenosyl-L-homocysteine. Functionally, mRNA capping methyltransferase that methylates the N7 position of the added guanosine to the 5'-cap structure of mRNAs. Binds RNA containing 5'-terminal GpppC. This is mRNA cap guanine-N(7) methyltransferase 2 from Arabidopsis thaliana (Mouse-ear cress).